The following is a 348-amino-acid chain: Dihydroorotase (348 aa).

His17 and His19 together coordinate Zn(2+). Residues 19-21 (HLR) and Asn45 contribute to the substrate site. Residues Lys103, His140, and His178 each contribute to the Zn(2+) site. An N6-carboxylysine modification is found at Lys103. Substrate is bound at residue His140. Position 223 (Leu223) interacts with substrate. Asp251 lines the Zn(2+) pocket. Asp251 is a catalytic residue. Substrate-binding residues include His255 and Ala267.

It belongs to the metallo-dependent hydrolases superfamily. DHOase family. Class II DHOase subfamily. As to quaternary structure, homodimer. Zn(2+) serves as cofactor.

It carries out the reaction (S)-dihydroorotate + H2O = N-carbamoyl-L-aspartate + H(+). The protein operates within pyrimidine metabolism; UMP biosynthesis via de novo pathway; (S)-dihydroorotate from bicarbonate: step 3/3. Its function is as follows. Catalyzes the reversible cyclization of carbamoyl aspartate to dihydroorotate. In Cronobacter sakazakii (strain ATCC BAA-894) (Enterobacter sakazakii), this protein is Dihydroorotase.